Here is an 843-residue protein sequence, read N- to C-terminus: DNA gyrase subunit A (843 aa).

The Topo IIA-type catalytic domain maps to 61–528; that stretch reads LPDVRDGLKP…ESSTFNAEDL (468 aa). Tyrosine 149 (O-(5'-phospho-DNA)-tyrosine intermediate) is an active-site residue. Residues 555–561 carry the GyrA-box motif; that stretch reads QKRGGKG.

The protein belongs to the type II topoisomerase GyrA/ParC subunit family. In terms of assembly, heterotetramer, composed of two GyrA and two GyrB chains. In the heterotetramer, GyrA contains the active site tyrosine that forms a transient covalent intermediate with DNA, while GyrB binds cofactors and catalyzes ATP hydrolysis.

Its subcellular location is the cytoplasm. The enzyme catalyses ATP-dependent breakage, passage and rejoining of double-stranded DNA.. In terms of biological role, a type II topoisomerase that negatively supercoils closed circular double-stranded (ds) DNA in an ATP-dependent manner to modulate DNA topology and maintain chromosomes in an underwound state. Negative supercoiling favors strand separation, and DNA replication, transcription, recombination and repair, all of which involve strand separation. Also able to catalyze the interconversion of other topological isomers of dsDNA rings, including catenanes and knotted rings. Type II topoisomerases break and join 2 DNA strands simultaneously in an ATP-dependent manner. This Leptospira biflexa serovar Patoc (strain Patoc 1 / Ames) protein is DNA gyrase subunit A.